The following is a 411-amino-acid chain: Phospholipase ABHD3 (411 aa).

Residues 25-45 traverse the membrane as a helical; Signal-anchor for type II membrane protein segment; that stretch reads VGFFGSGVGFSLILGFSVAYA. The 108-residue stretch at 140 to 247 folds into the AB hydrolase-1 domain; it reads PTVLLLPGLT…PLKAAATFSV (108 aa). Active-site charge relay system residues include Ser220, Asp346, and His375.

Belongs to the AB hydrolase superfamily. AB hydrolase 4 family.

The protein localises to the membrane. The enzyme catalyses a 1,2-diacyl-sn-glycero-3-phosphocholine + H2O = a 1-acyl-sn-glycero-3-phosphocholine + a fatty acid + H(+). It carries out the reaction a 1,2-diacyl-sn-glycero-3-phosphocholine + H2O = a 2-acyl-sn-glycero-3-phosphocholine + a fatty acid + H(+). It catalyses the reaction 1-tetradecanoyl-2-(9Z,12Z-octadecadienoyl)-sn-glycero-3-phosphocholine + H2O = 2-(9Z,12Z-octadecadienoyl)-sn-glycero-3-phosphocholine + tetradecanoate + H(+). The catalysed reaction is 1-tetradecanoyl-2-(9Z,12Z-octadecadienoyl)-sn-glycero-3-phosphocholine + H2O = 1-tetradecanoyl-sn-glycero-3-phosphocholine + (9Z,12Z)-octadecadienoate + H(+). The enzyme catalyses 1-tetradecanoyl-2-(5Z,8Z,11Z,14Z-eicosatetraenoyl)-sn-glycero-3-phosphocholine + H2O = 2-(5Z,8Z,11Z,14Z)-eicosatetraenoyl-sn-glycero-3-phosphocholine + tetradecanoate + H(+). It carries out the reaction 1-tetradecanoyl-2-(4Z,7Z,10Z,13Z,16Z,19Z-docosahexaenoyl)-sn-glycero-3-phosphocholine + H2O = 2-(4Z,7Z,10Z,13Z,16Z,19Z-docosahexaenoyl)-sn-glycero-3-phosphocholine + tetradecanoate + H(+). It catalyses the reaction 1,2-ditetradecanoyl-sn-glycero-3-phosphocholine + H2O = 2-tetradecanoyl-sn-glycero-3-phosphocholine + tetradecanoate + H(+). The catalysed reaction is 1-octadecanoyl-2-acetyl-sn-glycero-3-phosphocholine + H2O = 1-octadecanoyl-sn-glycero-3-phosphocholine + acetate + H(+). The enzyme catalyses 1,2-ditetradecanoyl-sn-glycero-3-phosphocholine + H2O = 1-tetradecanoyl-sn-glycero-3-phosphocholine + tetradecanoate + H(+). It carries out the reaction 1-octadecanoyl-2-pentanoyl-sn-glycero-3-phosphocholine + H2O = pentanoate + 1-octadecanoyl-sn-glycero-3-phosphocholine + H(+). It catalyses the reaction 1-octadecanoyl-2-hexanoyl-sn-glycero-3-phosphocholine + H2O = hexanoate + 1-octadecanoyl-sn-glycero-3-phosphocholine + H(+). The catalysed reaction is 1-octadecanoyl-2-octanoyl-sn-glycero-3-phosphocholine + H2O = 1-octadecanoyl-sn-glycero-3-phosphocholine + octanoate + H(+). The enzyme catalyses 1-octadecanoyl-2-nonanoyl-sn-glycero-3-phosphocholine + H2O = nonanoate + 1-octadecanoyl-sn-glycero-3-phosphocholine + H(+). It carries out the reaction 1-O-hexadecyl-2-nonadioyl-sn-glycero-3-phosphocholine + H2O = nonanedioate + 1-O-hexadecyl-sn-glycero-3-phosphocholine + H(+). It catalyses the reaction 1-hexadecanoyl-2-nonadioyl-sn-glycero-3-phosphocholine + H2O = nonanedioate + 1-hexadecanoyl-sn-glycero-3-phosphocholine + H(+). The catalysed reaction is 1-hexadecanoyl-2-(9-oxononanoyl)-sn-glycero-3-phosphocholine + H2O = 9-oxononanoate + 1-hexadecanoyl-sn-glycero-3-phosphocholine + H(+). The enzyme catalyses 1-hexadecanoyl-2-(5-oxopentanoyl)-sn-glycero-3-phosphocholine + H2O = 5-oxopentanoate + 1-hexadecanoyl-sn-glycero-3-phosphocholine + H(+). It carries out the reaction 1-hexadecanoyl-2-glutaroyl-sn-glycero-3-phosphocholine + H2O = glutarate + 1-hexadecanoyl-sn-glycero-3-phosphocholine + H(+). It catalyses the reaction 1-O-hexadecyl-2-acetyl-sn-glycero-3-phosphocholine + H2O = 1-O-hexadecyl-sn-glycero-3-phosphocholine + acetate + H(+). Phospholipase that may play a role in phospholipids remodeling. May selectively cleave myristate (C14)-containing phosphatidylcholines through its predominant phospholipase 1 activity, cleaving preferentially acyl groups in sn1 position. In parallel, may have a minor phospholipase 2 activity acting on acyl groups in position sn2. In addition to (C14)-containing phosphatidylcholines, may also act on other medium-chain-containing and oxidatively truncated phospholipids. The sequence is that of Phospholipase ABHD3 from Bos taurus (Bovine).